The following is a 772-amino-acid chain: Probable serine/threonine-protein kinase HAL5-like (772 aa).

Disordered stretches follow at residues 1-102 (MASS…TRHV), 115-165 (RAGT…EPNN), 185-241 (IDTQ…RSNT), and 344-396 (NADE…SANV). Basic and acidic residues predominate over residues 9–19 (SEPRISRESSL). Composition is skewed to low complexity over residues 20 to 33 (KRSL…KGLF) and 41 to 59 (NTGP…ISTP). Over residues 66–86 (TKDKQDRLKNLAANKEKELQT) the composition is skewed to basic and acidic residues. Residues 146-158 (RQSSSNRSSSFSN) are compositionally biased toward low complexity. Over residues 202-212 (RRSRSTQRKRL) the composition is skewed to basic residues. Residues 454–758 (GKSIGIIGQG…VDSLLKSSWM (305 aa)) form the Protein kinase domain. ATP-binding positions include 460–468 (IGQGAYGVV) and Lys498. Residue Asp609 is the Proton acceptor of the active site.

It belongs to the protein kinase superfamily. CAMK Ser/Thr protein kinase family. NPR/HAL subfamily. HAL5 sub-subfamily.

The catalysed reaction is L-seryl-[protein] + ATP = O-phospho-L-seryl-[protein] + ADP + H(+). The enzyme catalyses L-threonyl-[protein] + ATP = O-phospho-L-threonyl-[protein] + ADP + H(+). The protein is Probable serine/threonine-protein kinase HAL5-like of Kluyveromyces lactis (strain ATCC 8585 / CBS 2359 / DSM 70799 / NBRC 1267 / NRRL Y-1140 / WM37) (Yeast).